The following is a 408-amino-acid chain: Succinylornithine transaminase (408 aa).

Lys-252 is subject to N6-(pyridoxal phosphate)lysine.

It belongs to the class-III pyridoxal-phosphate-dependent aminotransferase family. AstC subfamily. Pyridoxal 5'-phosphate serves as cofactor.

The catalysed reaction is N(2)-succinyl-L-ornithine + 2-oxoglutarate = N-succinyl-L-glutamate 5-semialdehyde + L-glutamate. It functions in the pathway amino-acid degradation; L-arginine degradation via AST pathway; L-glutamate and succinate from L-arginine: step 3/5. Catalyzes the transamination of N(2)-succinylornithine and alpha-ketoglutarate into N(2)-succinylglutamate semialdehyde and glutamate. Can also act as an acetylornithine aminotransferase. In Salmonella typhi, this protein is Succinylornithine transaminase.